We begin with the raw amino-acid sequence, 374 residues long: Fe(2+) transport protein 1 (374 aa).

Residues 1-33 (MATPRTLVPILPPVAALLLLLVAASSIPILAAA) form the signal peptide. Over 34–62 (QPADACGGAPDQAAADGACHDVPRALRLK) the chain is Extracellular. The helical transmembrane segment at 63 to 83 (LIAIPTILVSSVVGVCLPLLS) threads the bilayer. At 84–92 (RSVPALRPD) the chain is on the cytoplasmic side. Residues 93–113 (GGLFAVVKAFASGVILATGYM) traverse the membrane as a helical segment. At 114–137 (HVLPDAFNNLTSPCLPRKPWSEFP) the chain is on the extracellular side. Residues 138–158 (FAAFVAMLAAVSTLMADSLML) form a helical membrane-spanning segment. The Cytoplasmic segment spans residues 159–219 (TYYNRSKPRP…ATQVQLRRNR (61 aa)). The tract at residues 166–199 (PRPSSGGDVAAVADHGESPDQGHRHGHGHGHGHG) is disordered. Positions 179-188 (DHGESPDQGH) are enriched in basic and acidic residues. Residues 220–240 (VVVQVLEIGIVVHSVVIGLGM) traverse the membrane as a helical segment. The Extracellular segment spans residues 241 to 251 (GASQNVCTIRP). Residues 252–272 (LVAAMCFHQMFEGMGLGGCIL) form a helical membrane-spanning segment. Residues 273 to 282 (QAEYGRRMRS) lie on the Cytoplasmic side of the membrane. Residues 283-303 (VLVFFFSTTTPFGIALGLALT) form a helical membrane-spanning segment. The Extracellular segment spans residues 304 to 313 (RVYRDNSPTA). A helical membrane pass occupies residues 314–334 (LIVVGLLNAASAGLLHYMALV). Residues 335–353 (ELLAADFMGPKLQGNVRLQ) are Cytoplasmic-facing. A helical membrane pass occupies residues 354 to 374 (LAAFLAVLLGAGGMSVMAKWA).

This sequence belongs to the ZIP transporter (TC 2.A.5) family. In terms of tissue distribution, expressed in companion cells in the upper region of the root.

Its subcellular location is the cell membrane. In terms of biological role, iron transporter involved in the uptake of iron from the rhizosphere across the plasma membrane in the root epidermal layer. May also transport other divalent cations. The sequence is that of Fe(2+) transport protein 1 (IRT1) from Oryza sativa subsp. japonica (Rice).